A 610-amino-acid polypeptide reads, in one-letter code: Menin (610 aa).

Positions 214–390 are interaction with FANCD2; the sequence is GVAERSWLYL…SLLEAGEERP (177 aa). A disordered region spans residues 460–552; it reads REAEAAEAEE…SPPPEGPVLT (93 aa). Residues 484–500 are compositionally biased toward basic and acidic residues; that stretch reads RRESKPEEPPPPKKPAL. Phosphoserine is present on residues S487 and S543. T594 bears the Phosphothreonine mark.

Component of the MLL-HCF complex, at least composed of KMT2A/MLL1, MEN1, ASH2L, RBBP5, DPY30, WDR5, HCFC1 and HCFC2. Component of the menin-associated histone methyltransferase complex, at least composed of KMT2B/MLL4, MEN1, ASH2L, RBBP5, DPY30 and WDR5. Interacts with POLR2B. Interacts with POLR2A phosphorylated at 'Ser-5', but not with the unphosphorylated, nor 'Ser-2' phosphorylated POLR2A forms. Interacts with FANCD2 and DBF4. Interacts with JUND (via MBM motif); inhibits the interaction of JUND with MAPK10 and the phosphorylation of JUND by MAP kinases MAPK8 and MAPK10. Interacts with SMAD3, but not with SMAD2, nor SMAD4. Directly interacts with NFKB1, NFKB2 and RELA. Interacts with KMT2A (via MBM motif). The KMT2A-MEN1 complex interacts with PSIP1 with a greater affinity as MEN1 enhances interaction of KMT2A with PSIP1. Interacts with the fusion protein KMT2A-MLLT3. Ubiquitous.

Its subcellular location is the nucleus. Essential component of a MLL/SET1 histone methyltransferase (HMT) complex, a complex that specifically methylates 'Lys-4' of histone H3 (H3K4). Functions as a transcriptional regulator. Binds to the TERT promoter and represses telomerase expression. Plays a role in TGFB1-mediated inhibition of cell-proliferation, possibly regulating SMAD3 transcriptional activity. Represses JUND-mediated transcriptional activation on AP1 sites, as well as that mediated by NFKB subunit RELA. Positively regulates HOXC8 and HOXC6 gene expression. May be involved in normal hematopoiesis through the activation of HOXA9 expression. May be involved in DNA repair. The sequence is that of Menin (MEN1) from Homo sapiens (Human).